The primary structure comprises 392 residues: Chaperone protein DnaJ (392 aa).

The 66-residue stretch at 2 to 67 (DYYTILGVAK…QKRESYDRYG (66 aa)) folds into the J domain. The segment at 149–227 (GVEKELLVSG…CRGQGRIKDK (79 aa)) adopts a CR-type zinc-finger fold. Cys162, Cys165, Cys179, Cys182, Cys201, Cys204, Cys215, and Cys218 together coordinate Zn(2+). CXXCXGXG motif repeat units follow at residues 162 to 169 (CDACSGSG), 179 to 186 (CDRCKGSG), 201 to 208 (CPDCSGEG), and 215 to 222 (CSECRGQG).

This sequence belongs to the DnaJ family. Homodimer. Zn(2+) is required as a cofactor.

Its subcellular location is the cytoplasm. Its function is as follows. Participates actively in the response to hyperosmotic and heat shock by preventing the aggregation of stress-denatured proteins and by disaggregating proteins, also in an autonomous, DnaK-independent fashion. Unfolded proteins bind initially to DnaJ; upon interaction with the DnaJ-bound protein, DnaK hydrolyzes its bound ATP, resulting in the formation of a stable complex. GrpE releases ADP from DnaK; ATP binding to DnaK triggers the release of the substrate protein, thus completing the reaction cycle. Several rounds of ATP-dependent interactions between DnaJ, DnaK and GrpE are required for fully efficient folding. Also involved, together with DnaK and GrpE, in the DNA replication of plasmids through activation of initiation proteins. The protein is Chaperone protein DnaJ of Chlamydia muridarum (strain MoPn / Nigg).